The sequence spans 551 residues: MRSALALAALLLLLLSPPSLSQEKSPQPGPTPMATSTSTRPAPASAPAPKSSVAASVPAEQNTTPMTTKAPATQSPSASPGSSVENSAPAQGSTTTQQSLSVTTKAEAKDAGGVPTAHVTGSARPVTSGSQVAAQDPAASKAPSNHSITTKPLATEATSQAPRQTTDVGTPGPTAPPVTNSTSPDLLGHATPKPSEGPQLSFPTAAGSLGPVTGSGTGSGTLSTPQGKPATLTPVASSAETQGMPSPMPPSPASPSSSPFPSSPSPSPALQPSGPSAAGTEDTTGRGPTSSSTELASTALHGPSTLSPTSAVRDQRVSCGPPERPTEQLLILNLTRSSPCIHVFQRQSQGEGETEISMHSTDSLPEDKLVTLLCRAAKPTFNPAQDQCHVLLAPMLGSHAVVVKEITIKTNLLPTAVFELLKDRWDDLREEGVSDMQLGDQGPPEETEDRFSLPLIITIVCMASFLLLVAALYGCCHQRLSHRKDQQRLTEELQTVENGYHDNPTLEVMETSAEMQEKKVVNLNGELGDSWIVPLDNLTKDDLDEEEDTHL.

The first 21 residues, 1 to 21 (MRSALALAALLLLLLSPPSLS), serve as a signal peptide directing secretion. Residues 18 to 324 (PSLSQEKSPQ…QRVSCGPPER (307 aa)) are disordered. At 22-452 (QEKSPQPGPT…PPEETEDRFS (431 aa)) the chain is on the extracellular side. The span at 32 to 59 (PMATSTSTRPAPASAPAPKSSVAASVPA) shows a compositional bias: low complexity. Over residues 60–90 (EQNTTPMTTKAPATQSPSASPGSSVENSAPA) the composition is skewed to polar residues. Positions 91–104 (QGSTTTQQSLSVTT) are enriched in low complexity. Residues 142–164 (APSNHSITTKPLATEATSQAPRQ) are compositionally biased toward polar residues. N-linked (GlcNAc...) asparagine glycosylation is found at Asn145 and Asn180. Over residues 234 to 244 (PVASSAETQGM) the composition is skewed to polar residues. A compositionally biased stretch (low complexity) spans 289-300 (TSSSTELASTAL). Asn333 is a glycosylation site (N-linked (GlcNAc...) asparagine). A helical transmembrane segment spans residues 453-473 (LPLIITIVCMASFLLLVAALY). The Cytoplasmic segment spans residues 474 to 551 (GCCHQRLSHR…DLDEEEDTHL (78 aa)). Thr511 bears the Phosphothreonine mark. Ser530 is modified (phosphoserine). Thr549 is modified (phosphothreonine).

It belongs to the podocalyxin family. As to quaternary structure, monomer; when associated with the membrane raft. Oligomer; when integrated in the apical membrane. Found in a complex with EZR, PODXL and NHERF2. Associates with the actin cytoskeleton through complex formation with EZR and NHERF2. Interacts (via the C-terminal PDZ-binding motif DTHL) with NHERF1 (via the PDZ domains); interaction is not detected in glomerular epithelium cells, take place early in the secretory pathway and is necessary for its apical membrane sorting. Interacts (via the C-terminal PDZ-binding motif DTHL) with NHERF2 (via the PDZ 1 domain); interaction is detected in glomerular epithelium cells. Interacts with EZR. Post-translationally, N- and O-linked glycosylated. Sialoglycoprotein. Glomerular epithelium cell (podocyte) and endothelial cells.

The protein localises to the apical cell membrane. It localises to the cell projection. The protein resides in the microvillus. It is found in the membrane raft. Its subcellular location is the lamellipodium. The protein localises to the filopodium. It localises to the ruffle. The protein resides in the membrane. In terms of biological role, involved in the regulation of both adhesion and cell morphology and cancer progression. Functions as an anti-adhesive molecule that maintains an open filtration pathway between neighboring foot processes in the podocyte by charge repulsion. Acts as a pro-adhesive molecule, enhancing the adherence of cells to immobilized ligands, increasing the rate of migration and cell-cell contacts in an integrin-dependent manner. Induces the formation of apical actin-dependent microvilli. Involved in the formation of a preapical plasma membrane subdomain to set up initial epithelial polarization and the apical lumen formation during renal tubulogenesis. Plays a role in cancer development and aggressiveness by inducing cell migration and invasion through its interaction with the actin-binding protein EZR. Affects EZR-dependent signaling events, leading to increased activities of the MAPK and PI3K pathways in cancer cells. This is Podocalyxin (PODXL) from Oryctolagus cuniculus (Rabbit).